A 371-amino-acid chain; its full sequence is Chorismate synthase (371 aa).

Residues Arg48 and Arg54 each contribute to the NADP(+) site. Residues 125-127 (RSS), 238-239 (NA), Gly278, 293-297 (KPTSS), and Arg319 contribute to the FMN site.

Belongs to the chorismate synthase family. Homotetramer. FMNH2 serves as cofactor.

The catalysed reaction is 5-O-(1-carboxyvinyl)-3-phosphoshikimate = chorismate + phosphate. It functions in the pathway metabolic intermediate biosynthesis; chorismate biosynthesis; chorismate from D-erythrose 4-phosphate and phosphoenolpyruvate: step 7/7. In terms of biological role, catalyzes the anti-1,4-elimination of the C-3 phosphate and the C-6 proR hydrogen from 5-enolpyruvylshikimate-3-phosphate (EPSP) to yield chorismate, which is the branch point compound that serves as the starting substrate for the three terminal pathways of aromatic amino acid biosynthesis. This reaction introduces a second double bond into the aromatic ring system. The chain is Chorismate synthase from Polynucleobacter asymbioticus (strain DSM 18221 / CIP 109841 / QLW-P1DMWA-1) (Polynucleobacter necessarius subsp. asymbioticus).